The following is a 357-amino-acid chain: Protein RecA (357 aa).

Residue 71–78 coordinates ATP; the sequence is GPESSGKT.

The protein belongs to the RecA family.

The protein resides in the cytoplasm. Its function is as follows. Can catalyze the hydrolysis of ATP in the presence of single-stranded DNA, the ATP-dependent uptake of single-stranded DNA by duplex DNA, and the ATP-dependent hybridization of homologous single-stranded DNAs. It interacts with LexA causing its activation and leading to its autocatalytic cleavage. This chain is Protein RecA, found in Ehrlichia ruminantium (strain Gardel).